The chain runs to 325 residues: Pyruvate dehydrogenase E1 component subunit beta (325 aa).

Residue glutamate 60 participates in thiamine diphosphate binding.

Heterodimer of an alpha and a beta chain. Thiamine diphosphate is required as a cofactor.

Its subcellular location is the cytoplasm. The protein localises to the secreted. The enzyme catalyses N(6)-[(R)-lipoyl]-L-lysyl-[protein] + pyruvate + H(+) = N(6)-[(R)-S(8)-acetyldihydrolipoyl]-L-lysyl-[protein] + CO2. Its activity is regulated as follows. Activity of the E1 module is inhibited by the pyruvate dehydrogenase inhibitor PdhI. Its function is as follows. The pyruvate dehydrogenase complex catalyzes the overall conversion of pyruvate to acetyl-CoA and CO(2). It contains multiple copies of three enzymatic components: pyruvate dehydrogenase (E1), dihydrolipoamide acetyltransferase (E2) and lipoamide dehydrogenase (E3). Functionally, the B.subtilis PDH complex also possesses branched-chain 2-oxoacid dehydrogenase (BCDH) activity. In Bacillus subtilis (strain 168), this protein is Pyruvate dehydrogenase E1 component subunit beta.